Consider the following 371-residue polypeptide: Alanine dehydrogenase (371 aa).

The substrate site is built by Arg-15 and Lys-75. The Proton donor/acceptor role is filled by His-96. NAD(+) contacts are provided by residues Ser-134, 178-179 (TA), Asp-198, Lys-203, Ser-220, 239-240 (VL), 267-270 (IAID), Arg-279, and 298-301 (VANM). Asp-270 acts as the Proton donor/acceptor in catalysis. Residues Glu-323 and His-327 each coordinate Mg(2+).

The protein belongs to the AlaDH/PNT family. As to quaternary structure, homohexamer. Trimer of dimers. Mg(2+) is required as a cofactor.

It localises to the secreted. It carries out the reaction L-alanine + NAD(+) + H2O = pyruvate + NH4(+) + NADH + H(+). It functions in the pathway amino-acid degradation; L-alanine degradation via dehydrogenase pathway; NH(3) and pyruvate from L-alanine: step 1/1. Inhibited by CuSO(4) and ZnCl(2). Functionally, catalyzes the reversible reductive amination of pyruvate to L-alanine. However, since the physiological environment of M.tuberculosis has a neutral pH, it can be assumed that the enzyme catalyzes exclusively the formation of L-alanine. May play a role in cell wall synthesis as L-alanine is an important constituent of the peptidoglycan layer. The protein is Alanine dehydrogenase (ald) of Mycobacterium tuberculosis (strain ATCC 25618 / H37Rv).